Reading from the N-terminus, the 299-residue chain is Probable alpha-L-glutamate ligase (299 aa).

An ATP-grasp domain is found at Leu112–Glu294. ATP is bound by residues Lys148, Asp185 to Phe186, Asp194, and Arg218 to Asn220. Mg(2+)-binding residues include Asp255, Glu267, and Asn269. Positions 255, 267, and 269 each coordinate Mn(2+).

Belongs to the RimK family. Requires Mg(2+) as cofactor. Mn(2+) serves as cofactor.

This chain is Probable alpha-L-glutamate ligase, found in Histophilus somni (strain 2336) (Haemophilus somnus).